The following is a 605-amino-acid chain: Elongation factor 4 (605 aa).

Residues 10 to 192 enclose the tr-type G domain; it reads KNIRNFAIVA…AIVMRLPPPH (183 aa). GTP-binding positions include 22–27 and 139–142; these read DHGKST and NKVD.

It belongs to the TRAFAC class translation factor GTPase superfamily. Classic translation factor GTPase family. LepA subfamily.

The protein localises to the cell inner membrane. The enzyme catalyses GTP + H2O = GDP + phosphate + H(+). Functionally, required for accurate and efficient protein synthesis under certain stress conditions. May act as a fidelity factor of the translation reaction, by catalyzing a one-codon backward translocation of tRNAs on improperly translocated ribosomes. Back-translocation proceeds from a post-translocation (POST) complex to a pre-translocation (PRE) complex, thus giving elongation factor G a second chance to translocate the tRNAs correctly. Binds to ribosomes in a GTP-dependent manner. The protein is Elongation factor 4 of Chelativorans sp. (strain BNC1).